A 246-amino-acid polypeptide reads, in one-letter code: Small ribosomal subunit protein uS3A (246 aa).

The region spanning 21–92 (LNEFLTRELA…SVELYAEKVA (72 aa)) is the KH type-2 domain. The tract at residues 215 to 246 (DEIVPTTPISEQKAAKPDQPQPPAMPQPVATA) is disordered.

It belongs to the universal ribosomal protein uS3 family.

Its subcellular location is the cytoplasm. It is found in the nucleus. The protein localises to the nucleolus. The protein resides in the mitochondrion inner membrane. It localises to the cytoskeleton. Its subcellular location is the spindle. It carries out the reaction 2'-deoxyribonucleotide-(2'-deoxyribose 5'-phosphate)-2'-deoxyribonucleotide-DNA = a 3'-end 2'-deoxyribonucleotide-(2,3-dehydro-2,3-deoxyribose 5'-phosphate)-DNA + a 5'-end 5'-phospho-2'-deoxyribonucleoside-DNA + H(+). Its function is as follows. Component of the small ribosomal subunit. The ribosome is a large ribonucleoprotein complex responsible for the synthesis of proteins in the cell. Has endonuclease activity and plays a role in repair of damaged DNA. Also involved in other processes including regulation of transcription, translation of its cognate mRNA, spindle formation and chromosome movement during mitosis, and apoptosis. This is Small ribosomal subunit protein uS3A (rps3-a) from Xenopus laevis (African clawed frog).